We begin with the raw amino-acid sequence, 1373 residues long: DNA-directed RNA polymerase subunit beta'' (1373 aa).

Residues Cys220, Cys293, Cys300, and Cys303 each coordinate Zn(2+).

This sequence belongs to the RNA polymerase beta' chain family. RpoC2 subfamily. As to quaternary structure, in plastids the minimal PEP RNA polymerase catalytic core is composed of four subunits: alpha, beta, beta', and beta''. When a (nuclear-encoded) sigma factor is associated with the core the holoenzyme is formed, which can initiate transcription. It depends on Zn(2+) as a cofactor.

The protein resides in the plastid. The protein localises to the chloroplast. It carries out the reaction RNA(n) + a ribonucleoside 5'-triphosphate = RNA(n+1) + diphosphate. Its function is as follows. DNA-dependent RNA polymerase catalyzes the transcription of DNA into RNA using the four ribonucleoside triphosphates as substrates. The protein is DNA-directed RNA polymerase subunit beta'' of Lepidium virginicum (Virginia pepperweed).